We begin with the raw amino-acid sequence, 841 residues long: Translation initiation factor IF-2 (841 aa).

Residues 94–258 (QRSPEEIEAE…HGFQSPTGPV (165 aa)) are disordered. Basic and acidic residues predominate over residues 96 to 136 (SPEEIEAERKRELEERRAVENAARQKAEEEAKRRAEEEARR). The span at 137–173 (QPAAAQPAGTEAVAAPVAPVEAVREAAPVAAAPAPAA) shows a compositional bias: low complexity. Composition is skewed to basic and acidic residues over residues 174 to 194 (DARK…DNNR), 200 to 217 (DGER…EKAP), and 225 to 234 (TTDEESDGFR). Residues 235–248 (RGGRGKAKLKKRNA) show a composition bias toward basic residues. Residues 341–510 (SRAPVVTVMG…LLQAEVLELK (170 aa)) enclose the tr-type G domain. The G1 stretch occupies residues 350-357 (GHVDHGKT). A GTP-binding site is contributed by 350 to 357 (GHVDHGKT). Residues 375–379 (GITQH) are G2. The G3 stretch occupies residues 396-399 (DTPG). GTP contacts are provided by residues 396–400 (DTPGH) and 450–453 (NKID). A G4 region spans residues 450–453 (NKID). The tract at residues 486–488 (SAK) is G5.

The protein belongs to the TRAFAC class translation factor GTPase superfamily. Classic translation factor GTPase family. IF-2 subfamily.

The protein localises to the cytoplasm. One of the essential components for the initiation of protein synthesis. Protects formylmethionyl-tRNA from spontaneous hydrolysis and promotes its binding to the 30S ribosomal subunits. Also involved in the hydrolysis of GTP during the formation of the 70S ribosomal complex. In Pseudomonas fluorescens (strain SBW25), this protein is Translation initiation factor IF-2.